The chain runs to 1000 residues: SEC23-interacting protein (1000 aa).

An interaction with SEC23A region spans residues 1–367 (MAERKPNGGS…YTEEFSEKLE (367 aa)). Residues 133-252 (FSPSISKAQP…QQVPARPGAP (120 aa)) form a disordered region. The span at 154 to 167 (SYLPSQPSSLPPSY) shows a compositional bias: low complexity. Over residues 207–218 (PGPPAHPPPSGP) the composition is skewed to pro residues. Low complexity predominate over residues 235–246 (SSVQSPAQQQVP). The SAM domain occupies 644 to 707 (KEVLTLQETL…NFVEHKAAKL (64 aa)). The interval 716–748 (AVAATSTKGQEQSAQKTKDMASLPSESNEPKRK) is disordered. Phosphoserine occurs at positions 737 and 926. One can recognise a DDHD domain in the interval 779-989 (LDFEPEIFFA…ALLLLKEIYR (211 aa)).

This sequence belongs to the PA-PLA1 family. In terms of assembly, interacts with SEC23A. Ubiquitously expressed with stronger levels detected in heart, liver and skeletal muscle.

The protein resides in the cytoplasmic vesicle. It localises to the COPII-coated vesicle membrane. It is found in the endoplasmic reticulum. Functionally, plays a role in the organization of endoplasmic reticulum exit sites. Specifically binds to phosphatidylinositol 3-phosphate (PI(3)P), phosphatidylinositol 4-phosphate (PI(4)P) and phosphatidylinositol 5-phosphate (PI(5)P). The polypeptide is SEC23-interacting protein (SEC23IP) (Homo sapiens (Human)).